A 194-amino-acid polypeptide reads, in one-letter code: MFKGIVEGIGIIEKIDIYTDLDKYAIRFPENMLNGIKKESSIMFNGCFLTVTSVNSNIVWFDIFEKEARKLDTFREYKVGDRVNLGTFPKFGAASGGHILSARISCVASIIEIIENEDYQQMWIQIPENFTEFLIDKDYIAVDGISLTIDTIKNNQFFISLPLKIAQNTNMKWRKKGDKVNVELSNKINANQCW.

Lumazine-binding repeat units lie at residues 1–98 and 99–194; these read MFKG…SGGH and ILSA…NQCW. An FMN-binding site is contributed by 179 to 183; it reads KVNVE.

In terms of assembly, homodimer. FMN serves as cofactor.

Antenna protein that modulates the color of the bioluminescence emission of the luciferase. In the presence of YFP and only at temperatures below 20 degrees Celsius, luciferase exhibits a bimodal emission spectrum with a new peak at 545 nM (yellow), in addition to the one at 485 nM. The polypeptide is Yellow fluorescent protein (luxY) (Aliivibrio fischeri (Vibrio fischeri)).